The sequence spans 303 residues: Nitrogenase iron protein (303 aa).

11–18 (GKGGIGKS) serves as a coordination point for ATP. [4Fe-4S] cluster is bound at residue Cys-112. An ADP-ribosylarginine; by dinitrogenase reductase ADP-ribosyltransferase modification is found at Arg-115. Position 147 (Cys-147) interacts with [4Fe-4S] cluster.

This sequence belongs to the NifH/BchL/ChlL family. In terms of assembly, homodimer. [4Fe-4S] cluster serves as cofactor. Post-translationally, the reversible ADP-ribosylation of Arg-115 inactivates the nitrogenase reductase and regulates nitrogenase activity.

It catalyses the reaction N2 + 8 reduced [2Fe-2S]-[ferredoxin] + 16 ATP + 16 H2O = H2 + 8 oxidized [2Fe-2S]-[ferredoxin] + 2 NH4(+) + 16 ADP + 16 phosphate + 6 H(+). The key enzymatic reactions in nitrogen fixation are catalyzed by the nitrogenase complex, which has 2 components: the iron protein and the molybdenum-iron protein. The chain is Nitrogenase iron protein from Wolinella succinogenes (strain ATCC 29543 / DSM 1740 / CCUG 13145 / JCM 31913 / LMG 7466 / NCTC 11488 / FDC 602W) (Vibrio succinogenes).